Consider the following 150-residue polypeptide: Large ribosomal subunit protein bL9 (150 aa).

It belongs to the bacterial ribosomal protein bL9 family.

Binds to the 23S rRNA. This Alcanivorax borkumensis (strain ATCC 700651 / DSM 11573 / NCIMB 13689 / SK2) protein is Large ribosomal subunit protein bL9.